Here is a 348-residue protein sequence, read N- to C-terminus: Galactose-1-phosphate uridylyltransferase (348 aa).

Residue 28–31 (RAKR) coordinates UDP-alpha-D-glucose. 2 residues coordinate Zn(2+): C52 and C55. Residues V61 and 77-78 (ND) each bind UDP-alpha-D-glucose. Residue H115 coordinates Zn(2+). UDP-alpha-D-glucose contacts are provided by residues N153 and 159-161 (GCS). H164 provides a ligand contact to Zn(2+). H166 (tele-UMP-histidine intermediate) is an active-site residue. UDP-alpha-D-glucose is bound at residue Q168. Residues E182, H281, H296, and H298 each contribute to the Fe cation site. UDP-alpha-D-glucose is bound by residues 311–312 (KF), 316–317 (YE), and Q323.

Belongs to the galactose-1-phosphate uridylyltransferase type 1 family. Homodimer. Zn(2+) serves as cofactor.

The enzyme catalyses alpha-D-galactose 1-phosphate + UDP-alpha-D-glucose = alpha-D-glucose 1-phosphate + UDP-alpha-D-galactose. It participates in carbohydrate metabolism; galactose metabolism. The chain is Galactose-1-phosphate uridylyltransferase (galT) from Escherichia coli (strain K12).